Here is a 170-residue protein sequence, read N- to C-terminus: Protein ripply3 (170 aa).

The WRPW motif motif lies at 40 to 43 (WRPW). Positions 79-114 (HPVRLYMPKSKTSEYLQHMGKKVLANFPVQATIHFY) are ripply homology domain. The segment covering 143–152 (VNSSRGSGDN) has biased composition (polar residues). The segment at 143-170 (VNSSRGSGDNYSVPGGPKRNISSHTGSA) is disordered.

The protein belongs to the ripply family. Interacts with tbx1 and tle4/grg4.

The protein resides in the nucleus. Acts as a transcriptional corepressor. Negative regulator of the transcriptional activity of tbx1 that plays a key role in pharyngeal development. Plays a role in the formation of the anteroposterior (AP) axis during embryonic development; required to establish the posterolateral border of the pre-placodal ectoderm (PPE) acting downstream of the retinoic acid receptor (RAR) signaling. This Xenopus tropicalis (Western clawed frog) protein is Protein ripply3.